The following is a 238-amino-acid chain: Ribosomal RNA small subunit methyltransferase G (238 aa).

S-adenosyl-L-methionine contacts are provided by residues G77, F82, 128-129 (AE), and R147.

It belongs to the methyltransferase superfamily. RNA methyltransferase RsmG family.

Its subcellular location is the cytoplasm. Its function is as follows. Specifically methylates the N7 position of guanine in position 535 of 16S rRNA. This Exiguobacterium sibiricum (strain DSM 17290 / CCUG 55495 / CIP 109462 / JCM 13490 / 255-15) protein is Ribosomal RNA small subunit methyltransferase G.